The chain runs to 161 residues: MPSFDIVSELDQHELTNAVDQANKEVTTRYDFKGTDSSFELKESMVTLKTESEFQLQQMLNILIEKANRRGIDVKCMEVKDPEIQLKTAKQVVEMKEGLDAPLAKKIIKAIKESKIKVQAAKQEDTIRVTGKKRDDLQAVMQLLKGMEDLDMPLQFNNFRD.

This sequence belongs to the YajQ family.

In terms of biological role, nucleotide-binding protein. In Hydrogenovibrio crunogenus (strain DSM 25203 / XCL-2) (Thiomicrospira crunogena), this protein is Nucleotide-binding protein Tcr_1902.